A 476-amino-acid chain; its full sequence is Aspartyl/glutamyl-tRNA(Asn/Gln) amidotransferase subunit B (476 aa).

The protein belongs to the GatB/GatE family. GatB subfamily. In terms of assembly, heterotrimer of A, B and C subunits.

It catalyses the reaction L-glutamyl-tRNA(Gln) + L-glutamine + ATP + H2O = L-glutaminyl-tRNA(Gln) + L-glutamate + ADP + phosphate + H(+). It carries out the reaction L-aspartyl-tRNA(Asn) + L-glutamine + ATP + H2O = L-asparaginyl-tRNA(Asn) + L-glutamate + ADP + phosphate + 2 H(+). Functionally, allows the formation of correctly charged Asn-tRNA(Asn) or Gln-tRNA(Gln) through the transamidation of misacylated Asp-tRNA(Asn) or Glu-tRNA(Gln) in organisms which lack either or both of asparaginyl-tRNA or glutaminyl-tRNA synthetases. The reaction takes place in the presence of glutamine and ATP through an activated phospho-Asp-tRNA(Asn) or phospho-Glu-tRNA(Gln). The sequence is that of Aspartyl/glutamyl-tRNA(Asn/Gln) amidotransferase subunit B from Clostridium botulinum (strain Langeland / NCTC 10281 / Type F).